The primary structure comprises 1633 residues: D-lysergyl-peptide-synthetase subunit 3 (1633 aa).

The interval phenylalanine 80–arginine 483 is adenylation (A) domain. The Carrier domain maps to glutamate 622–serine 691. O-(pantetheine 4'-phosphoryl)serine is present on serine 654. The segment at proline 836 to alanine 1127 is condensation (C) domain. The segment at valine 1256–tryptophan 1483 is reductase (R) domain.

Belongs to the NRP synthetase family.

Its pathway is alkaloid biosynthesis; ergot alkaloid biosynthesis. Functionally, D-lysergyl-peptide-synthetase subunit 3; part of the gene cluster that mediates the biosynthesis of fungal ergot alkaloid. DmaW catalyzes the first step of ergot alkaloid biosynthesis by condensing dimethylallyl diphosphate (DMAP) and tryptophan to form 4-dimethylallyl-L-tryptophan. The second step is catalyzed by the methyltransferase easF that methylates 4-dimethylallyl-L-tryptophan in the presence of S-adenosyl-L-methionine, resulting in the formation of 4-dimethylallyl-L-abrine. The catalase easC and the FAD-dependent oxidoreductase easE then transform 4-dimethylallyl-L-abrine to chanoclavine-I which is further oxidized by easD in the presence of NAD(+), resulting in the formation of chanoclavine-I aldehyde. Agroclavine dehydrogenase easG then mediates the conversion of chanoclavine-I aldehyde to agroclavine via a non-enzymatic adduct reaction: the substrate is an iminium intermediate that is formed spontaneously from chanoclavine-I aldehyde in the presence of glutathione. The presence of easA is not required to complete this reaction. Further conversion of agroclavine to paspalic acid is a two-step process involving oxidation of agroclavine to elymoclavine and of elymoclavine to paspalic acid, the second step being performed by the elymoclavine oxidase cloA. Paspalic acid is then further converted to D-lysergic acid. Ergopeptines are assembled from D-lysergic acid and three different amino acids by the D-lysergyl-peptide-synthetases composed each of a monomudular and a trimodular nonribosomal peptide synthetase subunit. LpsB and lpsC encode the monomodular subunits responsible for D-lysergic acid activation and incorporation into the ergopeptine backbone. LpsA1 and A2 subunits encode the trimodular nonribosomal peptide synthetase assembling the tripeptide portion of ergopeptines. LpsA1 is responsible for formation of the major ergopeptine, ergotamine, and lpsA2 for alpha-ergocryptine, the minor ergopeptine of the total alkaloid mixture elaborated by C.purpurea. D-lysergyl-tripeptides are assembled by the nonribosomal peptide synthetases and released as N-(D-lysergyl-aminoacyl)-lactams. Cyclolization of the D-lysergyl-tripeptides is performed by the Fe(2+)/2-ketoglutarate-dependent dioxygenase easH which introduces a hydroxyl group into N-(D-lysergyl-aminoacyl)-lactam at alpha-C of the aminoacyl residue followed by spontaneous condensation with the terminal lactam carbonyl group. This is D-lysergyl-peptide-synthetase subunit 3 from Claviceps purpurea (Ergot fungus).